The primary structure comprises 201 residues: Recombination protein RecR (201 aa).

The C4-type zinc-finger motif lies at 57 to 72 (CKYCRTFTEQEQCTIC). Residues 81–176 (GQICVVESPA…TASRIAHGVP (96 aa)) enclose the Toprim domain.

It belongs to the RecR family.

May play a role in DNA repair. It seems to be involved in an RecBC-independent recombinational process of DNA repair. It may act with RecF and RecO. The sequence is that of Recombination protein RecR from Photorhabdus laumondii subsp. laumondii (strain DSM 15139 / CIP 105565 / TT01) (Photorhabdus luminescens subsp. laumondii).